A 195-amino-acid polypeptide reads, in one-letter code: dTTP/UTP pyrophosphatase (195 aa).

The active-site Proton acceptor is Asp-73.

The protein belongs to the Maf family. YhdE subfamily. A divalent metal cation serves as cofactor.

Its subcellular location is the cytoplasm. The enzyme catalyses dTTP + H2O = dTMP + diphosphate + H(+). The catalysed reaction is UTP + H2O = UMP + diphosphate + H(+). Nucleoside triphosphate pyrophosphatase that hydrolyzes dTTP and UTP. May have a dual role in cell division arrest and in preventing the incorporation of modified nucleotides into cellular nucleic acids. In Desulfotalea psychrophila (strain LSv54 / DSM 12343), this protein is dTTP/UTP pyrophosphatase.